The primary structure comprises 149 residues: uncharacterized protein (149 aa).

2 consecutive transmembrane segments (helical) span residues 91-111 (IFIL…LFHY) and 122-142 (ISIL…ICLL).

It is found in the membrane. This is an uncharacterized protein from Dictyostelium discoideum (Social amoeba).